The following is a 359-amino-acid chain: Photosystem II protein D1 2 (359 aa).

Transmembrane regions (helical) follow at residues 29–46 (YVGW…AATT), 118–133 (HFLI…EWEL), and 142–156 (WICV…AASA). Residue His118 participates in chlorophyll a binding. Tyr126 contributes to the pheophytin a binding site. The [CaMn4O5] cluster site is built by Asp170 and Glu189. A helical membrane pass occupies residues 197 to 218 (FHMLGVAGVFGGSLFSAMHGSL). His198 contributes to the chlorophyll a binding site. A quinone-binding positions include His215 and 264–265 (SF). His215 is a binding site for Fe cation. His272 serves as a coordination point for Fe cation. Residues 274 to 288 (FLAAWPVVGIWFTAL) form a helical membrane-spanning segment. [CaMn4O5] cluster contacts are provided by His332, Glu333, Asp342, and Ala344. Residues 345 to 359 (AAESTPVALQAPAIG) constitute a propeptide that is removed on maturation.

Belongs to the reaction center PufL/M/PsbA/D family. PSII is composed of 1 copy each of membrane proteins PsbA, PsbB, PsbC, PsbD, PsbE, PsbF, PsbH, PsbI, PsbJ, PsbK, PsbL, PsbM, PsbT, PsbX, PsbY, PsbZ, Psb30/Ycf12, peripheral proteins PsbO, CyanoQ (PsbQ), PsbU, PsbV and a large number of cofactors. It forms dimeric complexes. Requires The D1/D2 heterodimer binds P680, chlorophylls that are the primary electron donor of PSII, and subsequent electron acceptors. It shares a non-heme iron and each subunit binds pheophytin, quinone, additional chlorophylls, carotenoids and lipids. D1 provides most of the ligands for the Mn4-Ca-O5 cluster of the oxygen-evolving complex (OEC). There is also a Cl(-1) ion associated with D1 and D2, which is required for oxygen evolution. The PSII complex binds additional chlorophylls, carotenoids and specific lipids. as cofactor. In terms of processing, tyr-161 forms a radical intermediate that is referred to as redox-active TyrZ, YZ or Y-Z. Post-translationally, C-terminally processed by CtpA; processing is essential to allow assembly of the oxygen-evolving complex and thus photosynthetic growth.

The protein resides in the cellular thylakoid membrane. The catalysed reaction is 2 a plastoquinone + 4 hnu + 2 H2O = 2 a plastoquinol + O2. Functionally, photosystem II (PSII) is a light-driven water:plastoquinone oxidoreductase that uses light energy to abstract electrons from H(2)O, generating O(2) and a proton gradient subsequently used for ATP formation. It consists of a core antenna complex that captures photons, and an electron transfer chain that converts photonic excitation into a charge separation. The D1/D2 (PsbA/PsbD) reaction center heterodimer binds P680, the primary electron donor of PSII as well as several subsequent electron acceptors. This chain is Photosystem II protein D1 2, found in Synechococcus sp. (strain CC9311).